A 715-amino-acid chain; its full sequence is Polyribonucleotide nucleotidyltransferase (715 aa).

Residues D488 and D494 each contribute to the Mg(2+) site. The region spanning 555 to 614 is the KH domain; that stretch reads PKIETIKIPVDKIREVIGSGGKVIREIVEKTGAKIDIGEDGTIKIAAAEQTKIDAAKEWI. Residues 624 to 692 form the S1 motif domain; the sequence is GQIYTGKVVK…DRGKTRLSMK (69 aa). Positions 692–715 are disordered; it reads KVVDQETGEDLSKSNEKAEEPADA. Residues 701–715 show a composition bias toward basic and acidic residues; it reads DLSKSNEKAEEPADA.

This sequence belongs to the polyribonucleotide nucleotidyltransferase family. Requires Mg(2+) as cofactor.

It is found in the cytoplasm. The catalysed reaction is RNA(n+1) + phosphate = RNA(n) + a ribonucleoside 5'-diphosphate. Functionally, involved in mRNA degradation. Catalyzes the phosphorolysis of single-stranded polyribonucleotides processively in the 3'- to 5'-direction. This is Polyribonucleotide nucleotidyltransferase from Phenylobacterium zucineum (strain HLK1).